The chain runs to 425 residues: Alpha-N-acetylgalactosaminidase (425 aa).

NAD(+) is bound by residues 29 to 30, Glu-51, 99 to 102, 119 to 120, and Asn-148; these read NR, WLTH, and EV. Tyr-177 provides a ligand contact to substrate. NAD(+)-binding positions include 194–198 and Tyr-211; that span reads FHNHW. Substrate contacts are provided by residues 211-214 and Tyr-293; that span reads YPTH.

The protein belongs to the Gfo/Idh/MocA family. Glycosyl hydrolase 109 subfamily. Requires NAD(+) as cofactor.

It catalyses the reaction Cleavage of non-reducing alpha-(1-&gt;3)-N-acetylgalactosamine residues from human blood group A and AB mucin glycoproteins, Forssman hapten and blood group A lacto series glycolipids.. In terms of biological role, glycosidase that has specific alpha-N-acetylgalactosaminidase activity. The chain is Alpha-N-acetylgalactosaminidase from Bacteroides fragilis (strain ATCC 25285 / DSM 2151 / CCUG 4856 / JCM 11019 / LMG 10263 / NCTC 9343 / Onslow / VPI 2553 / EN-2).